The sequence spans 674 residues: Amino-acid acetyltransferase, mitochondrial (674 aa).

The N-terminal 50 residues, 1–50 (MPLVAAMLTRSNGAWKKATSVVQASICRDQQRPNHTTITSVTSVSQRRHF), are a transit peptide targeting the mitochondrion. Polar residues predominate over residues 33–45 (PNHTTITSVTSVS). The interval 33–74 (PNHTTITSVTSVSQRRHFSSAENGAKPSRSHPSAAEAKQKRE) is disordered. An N-acetyltransferase domain is found at 497-665 (GTPRLKLTDT…YEDVCRGVVP (169 aa)).

It belongs to the acetyltransferase family.

The protein localises to the mitochondrion. It catalyses the reaction L-glutamate + acetyl-CoA = N-acetyl-L-glutamate + CoA + H(+). It functions in the pathway amino-acid biosynthesis; L-arginine biosynthesis; N(2)-acetyl-L-ornithine from L-glutamate: step 1/4. N-acetylglutamate synthase involved in arginine biosynthesis. The chain is Amino-acid acetyltransferase, mitochondrial (ARG2) from Podospora anserina (strain S / ATCC MYA-4624 / DSM 980 / FGSC 10383) (Pleurage anserina).